Here is a 138-residue protein sequence, read N- to C-terminus: Putative pre-16S rRNA nuclease (138 aa).

Belongs to the YqgF nuclease family.

The protein resides in the cytoplasm. Its function is as follows. Could be a nuclease involved in processing of the 5'-end of pre-16S rRNA. The sequence is that of Putative pre-16S rRNA nuclease from Carboxydothermus hydrogenoformans (strain ATCC BAA-161 / DSM 6008 / Z-2901).